Here is a 161-residue protein sequence, read N- to C-terminus: Nucleotide-binding protein BTH_I0730 (161 aa).

It belongs to the YajQ family.

Functionally, nucleotide-binding protein. This is Nucleotide-binding protein BTH_I0730 from Burkholderia thailandensis (strain ATCC 700388 / DSM 13276 / CCUG 48851 / CIP 106301 / E264).